Reading from the N-terminus, the 767-residue chain is Protein transport protein Sec23B (767 aa).

Ala2 bears the N-acetylalanine mark. Residues Cys61, Cys66, Cys85, and Cys88 each contribute to the Zn(2+) site. Lys564 bears the N6-acetyllysine mark. Residues 634 to 720 (PEPVLLDSSS…EHGGSQARFL (87 aa)) form a Gelsolin-like repeat.

Belongs to the SEC23/SEC24 family. SEC23 subfamily. As to quaternary structure, COPII is composed of at least five proteins: the Sec23/24 complex, the Sec13/31 complex and Sar1. Interacts with SAR1A. In terms of tissue distribution, ubiquitously expressed.

It is found in the cytoplasmic vesicle. It localises to the COPII-coated vesicle membrane. The protein localises to the endoplasmic reticulum membrane. The protein resides in the cytoplasm. Its subcellular location is the cytosol. Its function is as follows. Component of the coat protein complex II (COPII) which promotes the formation of transport vesicles from the endoplasmic reticulum (ER). The coat has two main functions, the physical deformation of the endoplasmic reticulum membrane into vesicles and the selection of cargo molecules for their transport to the Golgi complex. This Homo sapiens (Human) protein is Protein transport protein Sec23B.